Reading from the N-terminus, the 306-residue chain is tRNA pseudouridine synthase B (306 aa).

Residue Asp-47 is the Nucleophile of the active site.

The protein belongs to the pseudouridine synthase TruB family. Type 1 subfamily.

It catalyses the reaction uridine(55) in tRNA = pseudouridine(55) in tRNA. Responsible for synthesis of pseudouridine from uracil-55 in the psi GC loop of transfer RNAs. The sequence is that of tRNA pseudouridine synthase B from Neisseria meningitidis serogroup A / serotype 4A (strain DSM 15465 / Z2491).